The sequence spans 126 residues: Holo-[acyl-carrier-protein] synthase (126 aa).

The Mg(2+) site is built by Asp-9 and Glu-58.

It belongs to the P-Pant transferase superfamily. AcpS family. The cofactor is Mg(2+).

It is found in the cytoplasm. The catalysed reaction is apo-[ACP] + CoA = holo-[ACP] + adenosine 3',5'-bisphosphate + H(+). In terms of biological role, transfers the 4'-phosphopantetheine moiety from coenzyme A to a Ser of acyl-carrier-protein. The polypeptide is Holo-[acyl-carrier-protein] synthase (Pectobacterium atrosepticum (strain SCRI 1043 / ATCC BAA-672) (Erwinia carotovora subsp. atroseptica)).